A 402-amino-acid polypeptide reads, in one-letter code: NADH-quinone oxidoreductase subunit D (402 aa).

It belongs to the complex I 49 kDa subunit family. In terms of assembly, NDH-1 is composed of 14 different subunits. Subunits NuoB, C, D, E, F, and G constitute the peripheral sector of the complex.

It is found in the cell inner membrane. The enzyme catalyses a quinone + NADH + 5 H(+)(in) = a quinol + NAD(+) + 4 H(+)(out). NDH-1 shuttles electrons from NADH, via FMN and iron-sulfur (Fe-S) centers, to quinones in the respiratory chain. The immediate electron acceptor for the enzyme in this species is believed to be ubiquinone. Couples the redox reaction to proton translocation (for every two electrons transferred, four hydrogen ions are translocated across the cytoplasmic membrane), and thus conserves the redox energy in a proton gradient. This is NADH-quinone oxidoreductase subunit D from Maricaulis maris (strain MCS10) (Caulobacter maris).